Reading from the N-terminus, the 491-residue chain is Protein DETOXIFICATION 56 (491 aa).

12 helical membrane passes run 39–59 (LPLVVMNLLWFGKMTTTSVFL), 72–92 (LGFSFANVTGFSVLYGISAAM), 111–131 (TLFMAVLLLLLISVPISFLWL), 154–174 (LLYLLPELPILSFLCPLKAYL), 181–201 (LPIMFTTAAATSLHIPINIVL), 212–232 (MAVWITDFIVVILLTGYVIVV), 261–281 (GPCCLTVCLEWWCYEILVLLT), 291–311 (VSILIIVFNFDYLLYAVMLSL), 336–356 (YTTLIVGIISGCIGALVMIAF), 379–399 (MLIMAVIEVVNFPLMVCGEIV), 409–429 (MYANLSGFYLLALPLGATLAF), and 438–458 (FLIGLFVGISLCLSILLIFIA).

It belongs to the multi antimicrobial extrusion (MATE) (TC 2.A.66.1) family. As to quaternary structure, interacts with BCA4 and HT1. As to expression, preferentially expressed in guard cells.

Its subcellular location is the cell membrane. Its function is as follows. Could function as a HCO(3)(-) -sensing component in the CO(2) signaling pathway in guard cells. Acts as an upstream repressor of HT1. Plays a role in stomatal response to CO(2). The polypeptide is Protein DETOXIFICATION 56 (Arabidopsis thaliana (Mouse-ear cress)).